A 377-amino-acid polypeptide reads, in one-letter code: MSCAKPHILIIEPFYGGSHKQLIGALIEGLNHGDSEIFSLPAKKWHWRARTSALHFAQLIPRDHAFRVLFASSVLSLAELIGLRPDLAACRKIVYFHENQLIYPVREVKQRDCQYGFNEILSCLAADMVLFNSQFNCNSFLDNVQPFLNMQPDFKIKHIREQIEKKCQVLYFPVNFERFPIRKECVKGETAEDLDEKCIHLIWPHRWEHDKNPKLLVDTLCQLHERQVDFKVTICGESYQEIPEEFEHIQEKLGSKLVNFGHLEREEYLKTLLTGDIVISTADHEFFGVAMLEAAFCGCYPIAPNKLVYPEIYPKENLYNTSNALTKKLYNFCRMPRVFRKQRDQFFENFNFDRFSAKELVPKYLDIFNKHIADEQS.

This sequence belongs to the glycosyltransferase group 1 family. Glycosyltransferase 4 subfamily.

The catalysed reaction is queuosine(34) in tRNA(Asp) + GDP-alpha-D-mannose = O-4''-alpha-D-mannosylqueuosine(34) in tRNA(Asp) + GDP + H(+). Its function is as follows. Glycosyltransferase that specifically catalyzes mannosylation of cytoplasmic tRNA(Asp) modified with queuosine at position 34 (queuosine(34)). Mannosylates the cyclopentene moiety of queuosine(34) in tRNA(Asp) to form mannosyl-queuosine(34). This Drosophila melanogaster (Fruit fly) protein is tRNA-queuosine alpha-mannosyltransferase.